A 155-amino-acid chain; its full sequence is Transcriptional repressor NrdR (155 aa).

Positions 1–22 are disordered; sequence MRCPFCGHDETQVKDSRPSEDG. A zinc finger spans residues 3-34; the sequence is CPFCGHDETQVKDSRPSEDGAAIRRRRLCPQC. Positions 7–22 are enriched in basic and acidic residues; it reads GHDETQVKDSRPSEDG. Residues 49–139 enclose the ATP-cone domain; the sequence is ITILKRSGRR…VYRDFRETQD (91 aa).

The protein belongs to the NrdR family. Zn(2+) serves as cofactor.

Functionally, negatively regulates transcription of bacterial ribonucleotide reductase nrd genes and operons by binding to NrdR-boxes. The sequence is that of Transcriptional repressor NrdR from Phenylobacterium zucineum (strain HLK1).